A 171-amino-acid polypeptide reads, in one-letter code: ATP synthase subunit b (171 aa).

Residues 2–22 form a helical membrane-spanning segment; the sequence is FVVKMVLGFLILLSPLCATGL.

The protein belongs to the ATPase B chain family. As to quaternary structure, F-type ATPases have 2 components, F(1) - the catalytic core - and F(0) - the membrane proton channel. F(1) has five subunits: alpha(3), beta(3), gamma(1), delta(1), epsilon(1). F(0) has three main subunits: a(1), b(2) and c(10-14). The alpha and beta chains form an alternating ring which encloses part of the gamma chain. F(1) is attached to F(0) by a central stalk formed by the gamma and epsilon chains, while a peripheral stalk is formed by the delta and b chains.

It is found in the cell inner membrane. Its function is as follows. F(1)F(0) ATP synthase produces ATP from ADP in the presence of a proton or sodium gradient. F-type ATPases consist of two structural domains, F(1) containing the extramembraneous catalytic core and F(0) containing the membrane proton channel, linked together by a central stalk and a peripheral stalk. During catalysis, ATP synthesis in the catalytic domain of F(1) is coupled via a rotary mechanism of the central stalk subunits to proton translocation. Functionally, component of the F(0) channel, it forms part of the peripheral stalk, linking F(1) to F(0). In Helicobacter pylori (strain G27), this protein is ATP synthase subunit b.